The chain runs to 271 residues: Phthiotriol/phenolphthiotriol dimycocerosates methyltransferase 1 (271 aa).

The protein belongs to the methyltransferase superfamily. Phthiotriol/phenolphthiotriol dimycocerosates methyltransferase family.

In terms of biological role, catalyzes the methylation of the lipid moiety of the intermediate compounds phthiotriol and glycosylated phenolphthiotriol dimycoserosates to form phthiocerol dimycocerosates (DIM A) and glycosylated phenolphthiocerol dimycocerosates (PGL). The sequence is that of Phthiotriol/phenolphthiotriol dimycocerosates methyltransferase 1 from Mycobacterium ulcerans (strain Agy99).